We begin with the raw amino-acid sequence, 199 residues long: Cytochrome c oxidase assembly protein CtaG (199 aa).

Over 1–12 the chain is Cytoplasmic; it reads MTNTPQTPPKER. The helical; Signal-anchor for type II membrane protein transmembrane segment at 13–35 threads the bilayer; the sequence is ANGVIVGACLAFVAGMVGMAYAA. The Periplasmic segment spans residues 36–199; that stretch reads VPLYDMFCRV…VKDGETENRL (164 aa).

The protein belongs to the COX11/CtaG family.

The protein localises to the cell inner membrane. Exerts its effect at some terminal stage of cytochrome c oxidase synthesis, probably by being involved in the insertion of the copper B into subunit I. The polypeptide is Cytochrome c oxidase assembly protein CtaG (Sinorhizobium fredii (strain NBRC 101917 / NGR234)).